A 236-amino-acid polypeptide reads, in one-letter code: tRNA1(Val) (adenine(37)-N6)-methyltransferase (236 aa).

This sequence belongs to the methyltransferase superfamily. tRNA (adenine-N(6)-)-methyltransferase family.

Its subcellular location is the cytoplasm. The enzyme catalyses adenosine(37) in tRNA1(Val) + S-adenosyl-L-methionine = N(6)-methyladenosine(37) in tRNA1(Val) + S-adenosyl-L-homocysteine + H(+). Its function is as follows. Specifically methylates the adenine in position 37 of tRNA(1)(Val) (anticodon cmo5UAC). The sequence is that of tRNA1(Val) (adenine(37)-N6)-methyltransferase from Histophilus somni (strain 129Pt) (Haemophilus somnus).